Reading from the N-terminus, the 49-residue chain is Large ribosomal subunit protein bL32c (49 aa).

Positions 1–23 (MTPKKRKSKSKKNLRKTNWKKKA) are disordered.

This sequence belongs to the bacterial ribosomal protein bL32 family.

It is found in the plastid. The protein resides in the chloroplast. The chain is Large ribosomal subunit protein bL32c from Oltmannsiellopsis viridis (Marine flagellate).